The primary structure comprises 244 residues: 1-(5-phosphoribosyl)-5-[(5-phosphoribosylamino)methylideneamino] imidazole-4-carboxamide isomerase (244 aa).

Asp8 (proton acceptor) is an active-site residue. The active-site Proton donor is Asp129.

The protein belongs to the HisA/HisF family.

The protein localises to the cytoplasm. It catalyses the reaction 1-(5-phospho-beta-D-ribosyl)-5-[(5-phospho-beta-D-ribosylamino)methylideneamino]imidazole-4-carboxamide = 5-[(5-phospho-1-deoxy-D-ribulos-1-ylimino)methylamino]-1-(5-phospho-beta-D-ribosyl)imidazole-4-carboxamide. The protein operates within amino-acid biosynthesis; L-histidine biosynthesis; L-histidine from 5-phospho-alpha-D-ribose 1-diphosphate: step 4/9. In Thermodesulfovibrio yellowstonii (strain ATCC 51303 / DSM 11347 / YP87), this protein is 1-(5-phosphoribosyl)-5-[(5-phosphoribosylamino)methylideneamino] imidazole-4-carboxamide isomerase.